Consider the following 233-residue polypeptide: Octanoyltransferase (233 aa).

Positions 34-212 (PDRPDVLLLL…AFAQTFELDL (179 aa)) constitute a BPL/LPL catalytic domain. Substrate-binding positions include 76–83 (RGGEVTHH), 143–145 (AIG), and 156–158 (GFA). The Acyl-thioester intermediate role is filled by cysteine 174.

It belongs to the LipB family.

It localises to the cytoplasm. It carries out the reaction octanoyl-[ACP] + L-lysyl-[protein] = N(6)-octanoyl-L-lysyl-[protein] + holo-[ACP] + H(+). Its pathway is protein modification; protein lipoylation via endogenous pathway; protein N(6)-(lipoyl)lysine from octanoyl-[acyl-carrier-protein]: step 1/2. Its function is as follows. Catalyzes the transfer of endogenously produced octanoic acid from octanoyl-acyl-carrier-protein onto the lipoyl domains of lipoate-dependent enzymes. Lipoyl-ACP can also act as a substrate although octanoyl-ACP is likely to be the physiological substrate. This Synechococcus elongatus (strain ATCC 33912 / PCC 7942 / FACHB-805) (Anacystis nidulans R2) protein is Octanoyltransferase.